The primary structure comprises 600 residues: UvrABC system protein C (600 aa).

The 86-residue stretch at 15–100 folds into the GIY-YIG domain; that stretch reads NSTGVYQYFN…IKQLHPKYNI (86 aa). Positions 203-238 constitute a UVR domain; the sequence is SVLLKNLEKQMLVLAQNENYEEAAKVRDQIAMIKDL.

This sequence belongs to the UvrC family. In terms of assembly, interacts with UvrB in an incision complex.

The protein resides in the cytoplasm. Functionally, the UvrABC repair system catalyzes the recognition and processing of DNA lesions. UvrC both incises the 5' and 3' sides of the lesion. The N-terminal half is responsible for the 3' incision and the C-terminal half is responsible for the 5' incision. The chain is UvrABC system protein C from Campylobacter jejuni subsp. jejuni serotype O:2 (strain ATCC 700819 / NCTC 11168).